Here is a 358-residue protein sequence, read N- to C-terminus: Aromatic amino acid aminotransferase (358 aa).

An N6-(pyridoxal phosphate)lysine modification is found at Lys222.

This sequence belongs to the class-II pyridoxal-phosphate-dependent aminotransferase family. In terms of assembly, homodimer. Pyridoxal 5'-phosphate is required as a cofactor.

It catalyses the reaction an aromatic L-alpha-amino acid + 2-oxoglutarate = an aromatic oxo-acid + L-glutamate. In terms of biological role, aminotransferase that catalyzes the conversion of aromatic amino acids and 2-oxoglutarate into corresponding aromatic oxo acids and L-glutamate. This Mycobacterium sp. (strain JLS) protein is Aromatic amino acid aminotransferase.